A 506-amino-acid chain; its full sequence is EPTC-inducible aldehyde dehydrogenase (506 aa).

219–225 (GFGVEAG) contributes to the NAD(+) binding site. Catalysis depends on residues glutamate 263 and cysteine 302.

This sequence belongs to the aldehyde dehydrogenase family.

It carries out the reaction an aldehyde + NAD(+) + H2O = a carboxylate + NADH + 2 H(+). Degrades all aldehydes potentially generated by N dealkylation of thiocarbamates and may also participate in ethanolamine metabolism and further assimilation of degradation products by thiocarbamate-induced cytochrome P-450. This chain is EPTC-inducible aldehyde dehydrogenase (thcA), found in Rhodococcus erythropolis (Arthrobacter picolinophilus).